Consider the following 466-residue polypeptide: Putative proline/betaine transporter (466 aa).

12 helical membrane-spanning segments follow: residues 20 to 42, 63 to 83, 91 to 111, 116 to 136, 164 to 184, 191 to 211, 239 to 259, 285 to 305, 313 to 332, 337 to 354, 377 to 397, and 405 to 425; these read VVATGIGNAMEWFDFGVYAYTTA, FAALAIAFLLRPIGGVVFGII, VVLTSTIILMAFSTLTIGLLP, IGLWAPILLLLARVLQGFSTG, IGTLSGYIAASIMIAVLTFFL, SFGWRIPFLLGLFLGLFGLYL, IIRFYYIDIFVCFVAVVFFNV, VLITCVMAIMIPLALMFGKLA, VFLIGTGGLTLFSIIAFMLL, FVVIVIGIFILGFFLSTY, VTFNISVSIFGGTTPLVATWL, and LAPAYYLTAISVIGFLVITFL.

This sequence belongs to the major facilitator superfamily. Metabolite:H+ Symporter (MHS) family (TC 2.A.1.6) family.

The protein resides in the cell membrane. Functionally, may be a proton symporter involved in the uptake of osmolytes such as proline and glycine betaine. In Staphylococcus aureus (strain MSSA476), this protein is Putative proline/betaine transporter (proP).